Reading from the N-terminus, the 185-residue chain is Large ribosomal subunit protein uL5 (185 aa).

This sequence belongs to the universal ribosomal protein uL5 family. In terms of assembly, part of the 50S ribosomal subunit; part of the 5S rRNA/L5/L18/L25 subcomplex. Contacts the 5S rRNA and the P site tRNA. Forms a bridge to the 30S subunit in the 70S ribosome.

This is one of the proteins that bind and probably mediate the attachment of the 5S RNA into the large ribosomal subunit, where it forms part of the central protuberance. In the 70S ribosome it contacts protein S13 of the 30S subunit (bridge B1b), connecting the 2 subunits; this bridge is implicated in subunit movement. Contacts the P site tRNA; the 5S rRNA and some of its associated proteins might help stabilize positioning of ribosome-bound tRNAs. The chain is Large ribosomal subunit protein uL5 from Magnetococcus marinus (strain ATCC BAA-1437 / JCM 17883 / MC-1).